Consider the following 89-residue polypeptide: Small ribosomal subunit protein uS15 (89 aa).

This sequence belongs to the universal ribosomal protein uS15 family. In terms of assembly, part of the 30S ribosomal subunit. Forms a bridge to the 50S subunit in the 70S ribosome, contacting the 23S rRNA.

In terms of biological role, one of the primary rRNA binding proteins, it binds directly to 16S rRNA where it helps nucleate assembly of the platform of the 30S subunit by binding and bridging several RNA helices of the 16S rRNA. Forms an intersubunit bridge (bridge B4) with the 23S rRNA of the 50S subunit in the ribosome. This is Small ribosomal subunit protein uS15 from Bacillus anthracis (strain CDC 684 / NRRL 3495).